A 346-amino-acid polypeptide reads, in one-letter code: MEKLARKQVQQLTPYLSARRIGGTGDVWLNANESPFNNEYKTDFARLNRYSECQPKELISAYAAYAGVKPEQTLTSRGADEGIELLIRAFCEPGEDAILYCPPTYGMYGISAETIGVERKTVPLTSDWQLELAGIEANLDNVKLVFVCSPNNPTGNLVKREDIVSLLEMTKDRAIVVMDEAYIDFCPEASTVDLLAQYPNLAILRTLSKAFALAGLRCGFTLANEELINVLLKVIAPYPVPVPVAEIATQALSEAGLARAKFQVLDLNANRAYLQVGLSMIPVLEVFEGWGNYLLVKFPDGDGLFKAAWETGIILRNSPIENCVRISVGNRDECEKTLGFIRNYYA.

N6-(pyridoxal phosphate)lysine is present on K209.

The protein belongs to the class-II pyridoxal-phosphate-dependent aminotransferase family. Histidinol-phosphate aminotransferase subfamily. Homodimer. The cofactor is pyridoxal 5'-phosphate.

The enzyme catalyses L-histidinol phosphate + 2-oxoglutarate = 3-(imidazol-4-yl)-2-oxopropyl phosphate + L-glutamate. The protein operates within amino-acid biosynthesis; L-histidine biosynthesis; L-histidine from 5-phospho-alpha-D-ribose 1-diphosphate: step 7/9. This is Histidinol-phosphate aminotransferase from Vibrio campbellii (strain ATCC BAA-1116).